The sequence spans 150 residues: Protein SLM6 (150 aa).

At 1–76 the chain is on the extracellular side; sequence MCSRFSSTSL…SLLRSGVFPS (76 aa). Residues 77-97 form a helical membrane-spanning segment; that stretch reads WLFCMFSSILALAISNSFFFF. The Cytoplasmic segment spans residues 98–104; that stretch reads SSNACFS. Residues 105 to 125 traverse the membrane as a helical segment; it reads LLFNSFLVTGFSFSADLLVLA. Topologically, residues 126-150 are extracellular; sequence AAADTLESNVSNDIGGNCATRLFKL.

Its subcellular location is the membrane. The polypeptide is Protein SLM6 (Saccharomyces cerevisiae (strain ATCC 204508 / S288c) (Baker's yeast)).